Reading from the N-terminus, the 513-residue chain is ATP synthase subunit alpha 1 (513 aa).

Residue 169 to 176 (GDRQTGKT) coordinates ATP.

This sequence belongs to the ATPase alpha/beta chains family. In terms of assembly, F-type ATPases have 2 components, CF(1) - the catalytic core - and CF(0) - the membrane proton channel. CF(1) has five subunits: alpha(3), beta(3), gamma(1), delta(1), epsilon(1). CF(0) has three main subunits: a(1), b(2) and c(9-12). The alpha and beta chains form an alternating ring which encloses part of the gamma chain. CF(1) is attached to CF(0) by a central stalk formed by the gamma and epsilon chains, while a peripheral stalk is formed by the delta and b chains.

Its subcellular location is the cell inner membrane. The catalysed reaction is ATP + H2O + 4 H(+)(in) = ADP + phosphate + 5 H(+)(out). In terms of biological role, produces ATP from ADP in the presence of a proton gradient across the membrane. The alpha chain is a regulatory subunit. This Nitrosomonas eutropha (strain DSM 101675 / C91 / Nm57) protein is ATP synthase subunit alpha 1.